Reading from the N-terminus, the 424-residue chain is FeMo cofactor biosynthesis protein NifB (424 aa).

The region spanning 12–261 (NDSSRHTYGR…PQMKHCARCR (250 aa)) is the Radical SAM core domain. [4Fe-4S] cluster-binding residues include C30, C34, and C37. S-adenosyl-L-methionine contacts are provided by G84, T136, and V188. 2 residues coordinate [4Fe-4S] cluster: C257 and C260.

It belongs to the radical SAM superfamily. NifB family. Monomer. Requires [4Fe-4S] cluster as cofactor.

Its pathway is cofactor biosynthesis; Fe-Mo cofactor biosynthesis. Functionally, involved in the biosynthesis of the iron-molybdenum cofactor (FeMo-co or M-cluster) found in the dinitrogenase enzyme of the nitrogenase complex in nitrogen-fixing microorganisms. NifB catalyzes the crucial step of radical SAM-dependent carbide insertion that occurs concomitant with the insertion of a 9th sulfur and the rearrangement/coupling of two [4Fe-4S] clusters into a [8Fe-9S-C] cluster, the precursor to the M-cluster. This is FeMo cofactor biosynthesis protein NifB from Chlorobaculum tepidum (strain ATCC 49652 / DSM 12025 / NBRC 103806 / TLS) (Chlorobium tepidum).